The following is a 488-amino-acid chain: Malonate-semialdehyde dehydrogenase 2 (488 aa).

NAD(+) is bound by residues Phe155, Lys179, Glu182, Arg183, and Ser232. Cys287 acts as the Nucleophile in catalysis. Glu387 serves as a coordination point for NAD(+).

Belongs to the aldehyde dehydrogenase family. IolA subfamily. In terms of assembly, homotetramer.

The enzyme catalyses 3-oxopropanoate + NAD(+) + CoA + H2O = hydrogencarbonate + acetyl-CoA + NADH + H(+). It catalyses the reaction 2-methyl-3-oxopropanoate + NAD(+) + CoA + H2O = propanoyl-CoA + hydrogencarbonate + NADH + H(+). Its pathway is polyol metabolism; myo-inositol degradation into acetyl-CoA; acetyl-CoA from myo-inositol: step 7/7. Catalyzes the oxidation of malonate semialdehyde (MSA) and methylmalonate semialdehyde (MMSA) into acetyl-CoA and propanoyl-CoA, respectively. Is involved in a myo-inositol catabolic pathway. Bicarbonate, and not CO2, is the end-product of the enzymatic reaction. The polypeptide is Malonate-semialdehyde dehydrogenase 2 (Bacillus cereus (strain ZK / E33L)).